We begin with the raw amino-acid sequence, 130 residues long: Small ribosomal subunit protein uS8 (130 aa).

K88 carries the post-translational modification N6-succinyllysine.

It belongs to the universal ribosomal protein uS8 family. As to quaternary structure, component of the 40S ribosomal subunit. Part of the small subunit (SSU) processome, composed of more than 70 proteins and the RNA chaperone small nucleolar RNA (snoRNA) U3.

It is found in the cytoplasm. The protein localises to the nucleus. Its subcellular location is the nucleolus. In terms of biological role, component of the small ribosomal subunit. Part of the small subunit (SSU) processome, first precursor of the small eukaryotic ribosomal subunit. During the assembly of the SSU processome in the nucleolus, many ribosome biogenesis factors, an RNA chaperone and ribosomal proteins associate with the nascent pre-rRNA and work in concert to generate RNA folding, modifications, rearrangements and cleavage as well as targeted degradation of pre-ribosomal RNA by the RNA exosome. Required for proper erythropoiesis. The chain is Small ribosomal subunit protein uS8 (RPS15A) from Pongo abelii (Sumatran orangutan).